Consider the following 1234-residue polypeptide: Transcription-repair-coupling factor (1234 aa).

Positions 663–824 (DMEKPIPMDR…LAGIREMSTI (162 aa)) constitute a Helicase ATP-binding domain. 676-683 (GDVGYGKT) is an ATP binding site. Positions 777–780 (DEEQ) match the DEEQ box motif. In terms of domain architecture, Helicase C-terminal spans 842 to 999 (DDKQIAAALR…GMAVALKDLE (158 aa)). A disordered region spans residues 1207–1234 (RQHIGITNPSPPGEDGRGRNTTIKERQP). The segment covering 1220–1234 (EDGRGRNTTIKERQP) has biased composition (basic and acidic residues).

The protein in the N-terminal section; belongs to the UvrB family. It in the C-terminal section; belongs to the helicase family. RecG subfamily.

It localises to the cytoplasm. In terms of biological role, couples transcription and DNA repair by recognizing RNA polymerase (RNAP) stalled at DNA lesions. Mediates ATP-dependent release of RNAP and its truncated transcript from the DNA, and recruitment of nucleotide excision repair machinery to the damaged site. This Mycobacterium bovis (strain ATCC BAA-935 / AF2122/97) protein is Transcription-repair-coupling factor.